Here is a 285-residue protein sequence, read N- to C-terminus: Protoheme IX farnesyltransferase (285 aa).

7 helical membrane passes run 16–36 (AKPK…ILAF), 40–60 (WYNL…SMII), 106–126 (LLAN…YVFV), 136–156 (WLNI…GYAA), 165–185 (SLLL…ALAL), 217–237 (ILMI…YVII), and 265–285 (YKFS…SFIL).

The protein belongs to the UbiA prenyltransferase family. Protoheme IX farnesyltransferase subfamily.

It localises to the cell membrane. The catalysed reaction is heme b + (2E,6E)-farnesyl diphosphate + H2O = Fe(II)-heme o + diphosphate. The protein operates within porphyrin-containing compound metabolism; heme O biosynthesis; heme O from protoheme: step 1/1. Its function is as follows. Converts heme B (protoheme IX) to heme O by substitution of the vinyl group on carbon 2 of heme B porphyrin ring with a hydroxyethyl farnesyl side group. This Sulfolobus acidocaldarius (strain ATCC 33909 / DSM 639 / JCM 8929 / NBRC 15157 / NCIMB 11770) protein is Protoheme IX farnesyltransferase.